Consider the following 386-residue polypeptide: Formate-dependent phosphoribosylglycinamide formyltransferase (386 aa).

N(1)-(5-phospho-beta-D-ribosyl)glycinamide contacts are provided by residues 10-11 (EL) and glutamate 70. ATP contacts are provided by residues arginine 102, lysine 143, 148–153 (SSGKGQ), 183–186 (EAFV), and glutamate 191. Positions 107–298 (DLAAKELGLK…EFELHLRAIL (192 aa)) constitute an ATP-grasp domain. The Mg(2+) site is built by glutamate 256 and glutamate 268. Residues aspartate 275, lysine 346, and 353-354 (RR) each bind N(1)-(5-phospho-beta-D-ribosyl)glycinamide.

It belongs to the PurK/PurT family. As to quaternary structure, homodimer.

It catalyses the reaction N(1)-(5-phospho-beta-D-ribosyl)glycinamide + formate + ATP = N(2)-formyl-N(1)-(5-phospho-beta-D-ribosyl)glycinamide + ADP + phosphate + H(+). The protein operates within purine metabolism; IMP biosynthesis via de novo pathway; N(2)-formyl-N(1)-(5-phospho-D-ribosyl)glycinamide from N(1)-(5-phospho-D-ribosyl)glycinamide (formate route): step 1/1. Its function is as follows. Involved in the de novo purine biosynthesis. Catalyzes the transfer of formate to 5-phospho-ribosyl-glycinamide (GAR), producing 5-phospho-ribosyl-N-formylglycinamide (FGAR). Formate is provided by PurU via hydrolysis of 10-formyl-tetrahydrofolate. The sequence is that of Formate-dependent phosphoribosylglycinamide formyltransferase from Flavobacterium psychrophilum (strain ATCC 49511 / DSM 21280 / CIP 103535 / JIP02/86).